Here is a 654-residue protein sequence, read N- to C-terminus: Beta-mannosyltransferase 2 (654 aa).

At 1–37 (MLAWLRHRIRSYNTSTYSSILPSASFGKVYKIGTKLN) the chain is on the cytoplasmic side. The helical transmembrane segment at 38–58 (FTLLALCLLLACSVFFNYFYL) threads the bilayer. Residues 59–654 (ADNNGLDIDT…ANGNGKGSSS (596 aa)) are Extracellular-facing.

Belongs to the BMT family.

The protein localises to the membrane. Functionally, beta-mannosyltransferase involved in cell wall biosynthesis. Required for the addition of beta-mannose to the acid-labile fraction of cell wall phosphopeptidomannan. This chain is Beta-mannosyltransferase 2 (RHD1), found in Candida albicans (strain SC5314 / ATCC MYA-2876) (Yeast).